We begin with the raw amino-acid sequence, 328 residues long: UPF0194 membrane protein YPA_1093 (328 aa).

The signal sequence occupies residues 1–22 (MNRKKIIVAAVIVALLATLAYG). Coiled-coil stretches lie at residues 80–109 (YLNA…REEE) and 141–209 (KAVS…ILLA).

This sequence belongs to the UPF0194 family.

It is found in the periplasm. This chain is UPF0194 membrane protein YPA_1093, found in Yersinia pestis bv. Antiqua (strain Antiqua).